The sequence spans 58 residues: UPF0391 membrane protein Shewmr4_2671 (58 aa).

Helical transmembrane passes span 6 to 26 (LMFL…IAGA) and 28 to 48 (AGIA…SLLV).

The protein belongs to the UPF0391 family.

It is found in the cell membrane. The chain is UPF0391 membrane protein Shewmr4_2671 from Shewanella sp. (strain MR-4).